The following is a 332-amino-acid chain: Heptahelical transmembrane protein 1 (332 aa).

A disordered region spans residues 1–52 (MDQNGHNDEAETVSCGNGNCKSKIVPGDDHGGDESSGTKRRKKRKTQQKTMK). Residues 1 to 98 (MDQNGHNDEA…VFSFHNESLN (98 aa)) lie on the Cytoplasmic side of the membrane. Residues 26 to 37 (PGDDHGGDESSG) show a composition bias toward basic and acidic residues. Residues 38–52 (TKRRKKRKTQQKTMK) show a composition bias toward basic residues. A helical membrane pass occupies residues 99 to 119 (VWTHLIGFIFFVALTVANIIH). Residues 120–138 (HDGFFPVDAKSPGNVTRWP) lie on the Extracellular side of the membrane. The helical transmembrane segment at 139-159 (FFVFLGGSMFCLLASSICHLF) threads the bilayer. Residues 160-172 (CCHSKELNVFLLR) are Cytoplasmic-facing. Residues 173–193 (IDYAGITAMIITSFFPPIFYI) form a helical membrane-spanning segment. Residues 194-199 (FQCTPR) are Extracellular-facing. Residues 200 to 220 (WYFIYLAGITSMGIFTIITLF) traverse the membrane as a helical segment. The Cytoplasmic portion of the chain corresponds to 221-233 (TPSLSAPKYRAFR). The helical transmembrane segment at 234-254 (ALLFASMGLFGIVPAAHALVV) threads the bilayer. The Extracellular segment spans residues 255–262 (NWGNPQRN). A helical transmembrane segment spans residues 263-283 (VTLVYELLMAVFYLVGTGFYV). Over 284 to 303 (GRVPERLKPGWFDRVGHSHQ) the chain is Cytoplasmic. The chain crosses the membrane as a helical span at residues 304-324 (IFHVFVLLGALSHYAAALLFL). The Extracellular segment spans residues 325–332 (DWRDHVGC).

The protein belongs to the ADIPOR family. In terms of assembly, interacts (via N-terminus) with SCRM/ICE1. As to expression, expressed in roots, hypocotyls, vasculature of cotyledons and leaves, hydathodes and guard cells. In reproductive organs, expressed in trichomes, veins of sepals, stamens and stigmata of pistils.

The protein localises to the membrane. Its function is as follows. May act as a negative regulator of abscisic acid (ABA)-mediated osmotic stress signaling and function in cross-talk between cold and osmotic signaling. The polypeptide is Heptahelical transmembrane protein 1 (HHP1) (Arabidopsis thaliana (Mouse-ear cress)).